The primary structure comprises 298 residues: Inosose dehydratase (298 aa).

It belongs to the IolE/MocC family. Glutathione is required as a cofactor. The cofactor is Co(2+). It depends on Mn(2+) as a cofactor.

The enzyme catalyses scyllo-inosose = 3D-3,5/4-trihydroxycyclohexane-1,2-dione + H2O. It participates in polyol metabolism; myo-inositol degradation into acetyl-CoA; acetyl-CoA from myo-inositol: step 2/7. Its function is as follows. Catalyzes the dehydration of inosose (2-keto-myo-inositol, 2KMI or 2,4,6/3,5-pentahydroxycyclohexanone) to 3D-(3,5/4)-trihydroxycyclohexane-1,2-dione (D-2,3-diketo-4-deoxy-epi-inositol). The protein is Inosose dehydratase of Bacillus anthracis (strain CDC 684 / NRRL 3495).